A 268-amino-acid chain; its full sequence is Tropinone reductase homolog (268 aa).

Leucine 21–tyrosine 45 is an NADP(+) binding site. A substrate-binding site is contributed by serine 154. Catalysis depends on tyrosine 167, which acts as the Proton acceptor.

It belongs to the short-chain dehydrogenases/reductases (SDR) family.

The chain is Tropinone reductase homolog from Datura stramonium (Jimsonweed).